The sequence spans 74 residues: ATP synthase subunit c (74 aa).

Helical transmembrane passes span 8 to 28 (FIGIGFMAIGMYGAALGVSNI) and 52 to 72 (IGAGLAEAMGLFAFVIAMLLI).

The protein belongs to the ATPase C chain family. F-type ATPases have 2 components, F(1) - the catalytic core - and F(0) - the membrane proton channel. F(1) has five subunits: alpha(3), beta(3), gamma(1), delta(1), epsilon(1). F(0) has three main subunits: a(1), b(2) and c(10-14). The alpha and beta chains form an alternating ring which encloses part of the gamma chain. F(1) is attached to F(0) by a central stalk formed by the gamma and epsilon chains, while a peripheral stalk is formed by the delta and b chains.

The protein localises to the cell inner membrane. In terms of biological role, f(1)F(0) ATP synthase produces ATP from ADP in the presence of a proton or sodium gradient. F-type ATPases consist of two structural domains, F(1) containing the extramembraneous catalytic core and F(0) containing the membrane proton channel, linked together by a central stalk and a peripheral stalk. During catalysis, ATP synthesis in the catalytic domain of F(1) is coupled via a rotary mechanism of the central stalk subunits to proton translocation. Key component of the F(0) channel; it plays a direct role in translocation across the membrane. A homomeric c-ring of between 10-14 subunits forms the central stalk rotor element with the F(1) delta and epsilon subunits. This chain is ATP synthase subunit c, found in Rickettsia typhi (strain ATCC VR-144 / Wilmington).